The sequence spans 388 residues: Phosphopentomutase (388 aa).

Positions 10, 282, 287, 323, 324, and 335 each coordinate Mn(2+).

It belongs to the phosphopentomutase family. It depends on Mn(2+) as a cofactor.

The protein localises to the cytoplasm. It catalyses the reaction 2-deoxy-alpha-D-ribose 1-phosphate = 2-deoxy-D-ribose 5-phosphate. The catalysed reaction is alpha-D-ribose 1-phosphate = D-ribose 5-phosphate. It participates in carbohydrate degradation; 2-deoxy-D-ribose 1-phosphate degradation; D-glyceraldehyde 3-phosphate and acetaldehyde from 2-deoxy-alpha-D-ribose 1-phosphate: step 1/2. Its function is as follows. Isomerase that catalyzes the conversion of deoxy-ribose 1-phosphate (dRib-1-P) and ribose 1-phosphate (Rib-1-P) to deoxy-ribose 5-phosphate (dRib-5-P) and ribose 5-phosphate (Rib-5-P), respectively. In Desulfitobacterium hafniense (strain DSM 10664 / DCB-2), this protein is Phosphopentomutase.